The sequence spans 552 residues: CTP synthase (552 aa).

Residues 1-270 are amidoligase domain; the sequence is MTKYVFVTGG…DRIICEELKL (270 aa). Residue serine 13 participates in CTP binding. Serine 13 contacts UTP. ATP contacts are provided by residues 14 to 19 and aspartate 71; that span reads SLGKGI. Mg(2+) contacts are provided by aspartate 71 and glutamate 144. Residues 151 to 153, 191 to 196, and lysine 227 each bind CTP; these read DIE and KTKPTQ. Residues 191-196 and lysine 227 contribute to the UTP site; that span reads KTKPTQ. A Glutamine amidotransferase type-1 domain is found at 295–547; that stretch reads TIGMVGKYVD…VEAALANKQA (253 aa). An L-glutamine-binding site is contributed by glycine 356. Cysteine 383 (nucleophile; for glutamine hydrolysis) is an active-site residue. Residues 384 to 387, glutamate 407, and arginine 473 contribute to the L-glutamine site; that span reads LGMQ. Catalysis depends on residues histidine 520 and glutamate 522.

Belongs to the CTP synthase family. In terms of assembly, homotetramer.

It catalyses the reaction UTP + L-glutamine + ATP + H2O = CTP + L-glutamate + ADP + phosphate + 2 H(+). The enzyme catalyses L-glutamine + H2O = L-glutamate + NH4(+). The catalysed reaction is UTP + NH4(+) + ATP = CTP + ADP + phosphate + 2 H(+). The protein operates within pyrimidine metabolism; CTP biosynthesis via de novo pathway; CTP from UDP: step 2/2. Its activity is regulated as follows. Allosterically activated by GTP, when glutamine is the substrate; GTP has no effect on the reaction when ammonia is the substrate. The allosteric effector GTP functions by stabilizing the protein conformation that binds the tetrahedral intermediate(s) formed during glutamine hydrolysis. Inhibited by the product CTP, via allosteric rather than competitive inhibition. In terms of biological role, catalyzes the ATP-dependent amination of UTP to CTP with either L-glutamine or ammonia as the source of nitrogen. Regulates intracellular CTP levels through interactions with the four ribonucleotide triphosphates. This Burkholderia cenocepacia (strain HI2424) protein is CTP synthase.